A 463-amino-acid chain; its full sequence is Asparagine--tRNA ligase (463 aa).

The protein belongs to the class-II aminoacyl-tRNA synthetase family. As to quaternary structure, homodimer.

It is found in the cytoplasm. The catalysed reaction is tRNA(Asn) + L-asparagine + ATP = L-asparaginyl-tRNA(Asn) + AMP + diphosphate + H(+). The sequence is that of Asparagine--tRNA ligase from Bacillus cytotoxicus (strain DSM 22905 / CIP 110041 / 391-98 / NVH 391-98).